The primary structure comprises 491 residues: UDP-N-acetylmuramate--L-alanine ligase (491 aa).

126–132 lines the ATP pocket; that stretch reads GTHGKTT.

The protein belongs to the MurCDEF family.

The protein resides in the cytoplasm. The enzyme catalyses UDP-N-acetyl-alpha-D-muramate + L-alanine + ATP = UDP-N-acetyl-alpha-D-muramoyl-L-alanine + ADP + phosphate + H(+). It participates in cell wall biogenesis; peptidoglycan biosynthesis. Cell wall formation. This chain is UDP-N-acetylmuramate--L-alanine ligase, found in Escherichia coli (strain SMS-3-5 / SECEC).